We begin with the raw amino-acid sequence, 266 residues long: 3-methyl-2-oxobutanoate hydroxymethyltransferase (266 aa).

2 residues coordinate Mg(2+): D45 and D84. 3-methyl-2-oxobutanoate contacts are provided by residues 45–46, D84, and K113; that span reads DS. E115 is a Mg(2+) binding site. The Proton acceptor role is filled by E183.

It belongs to the PanB family. As to quaternary structure, homodecamer; pentamer of dimers. It depends on Mg(2+) as a cofactor.

The protein resides in the cytoplasm. It catalyses the reaction 3-methyl-2-oxobutanoate + (6R)-5,10-methylene-5,6,7,8-tetrahydrofolate + H2O = 2-dehydropantoate + (6S)-5,6,7,8-tetrahydrofolate. The protein operates within cofactor biosynthesis; (R)-pantothenate biosynthesis; (R)-pantoate from 3-methyl-2-oxobutanoate: step 1/2. In terms of biological role, catalyzes the reversible reaction in which hydroxymethyl group from 5,10-methylenetetrahydrofolate is transferred onto alpha-ketoisovalerate to form ketopantoate. The protein is 3-methyl-2-oxobutanoate hydroxymethyltransferase of Coxiella burnetii (strain CbuG_Q212) (Coxiella burnetii (strain Q212)).